The primary structure comprises 238 residues: Dolichyldiphosphatase 1 (238 aa).

Helical transmembrane passes span Leu33 to Phe53, Pro100 to Leu120, Phe130 to Val150, and Trp162 to Phe182.

This sequence belongs to the dolichyldiphosphatase family.

The protein localises to the endoplasmic reticulum membrane. The enzyme catalyses a di-trans,poly-cis-dolichyl diphosphate + H2O = a di-trans,poly-cis-dolichyl phosphate + phosphate + H(+). It participates in protein modification; protein glycosylation. In terms of biological role, required for efficient N-glycosylation. Necessary for maintaining optimal levels of dolichol-linked oligosaccharides. Hydrolyzes dolichyl pyrophosphate at a very high rate and dolichyl monophosphate at a much lower rate. Does not act on phosphatidate. This Callithrix jacchus (White-tufted-ear marmoset) protein is Dolichyldiphosphatase 1 (DOLPP1).